The primary structure comprises 223 residues: Deoxyribose-phosphate aldolase (223 aa).

Aspartate 91 functions as the Proton donor/acceptor in the catalytic mechanism. Lysine 153 serves as the catalytic Schiff-base intermediate with acetaldehyde. Lysine 182 serves as the catalytic Proton donor/acceptor.

Belongs to the DeoC/FbaB aldolase family. DeoC type 1 subfamily.

Its subcellular location is the cytoplasm. The enzyme catalyses 2-deoxy-D-ribose 5-phosphate = D-glyceraldehyde 3-phosphate + acetaldehyde. The protein operates within carbohydrate degradation; 2-deoxy-D-ribose 1-phosphate degradation; D-glyceraldehyde 3-phosphate and acetaldehyde from 2-deoxy-alpha-D-ribose 1-phosphate: step 2/2. Its function is as follows. Catalyzes a reversible aldol reaction between acetaldehyde and D-glyceraldehyde 3-phosphate to generate 2-deoxy-D-ribose 5-phosphate. In Yersinia pseudotuberculosis serotype O:1b (strain IP 31758), this protein is Deoxyribose-phosphate aldolase.